The chain runs to 556 residues: Hydroxylamine reductase (556 aa).

The [4Fe-4S] cluster site is built by C5, C8, C17, and C23. The hybrid [4Fe-2O-2S] cluster site is built by H249, E273, C317, C409, C437, C462, E497, and K499. Position 409 is a cysteine persulfide (C409).

Belongs to the HCP family. [4Fe-4S] cluster is required as a cofactor. It depends on hybrid [4Fe-2O-2S] cluster as a cofactor.

The protein localises to the cytoplasm. The enzyme catalyses A + NH4(+) + H2O = hydroxylamine + AH2 + H(+). Functionally, catalyzes the reduction of hydroxylamine to form NH(3) and H(2)O. The polypeptide is Hydroxylamine reductase (Kosmotoga olearia (strain ATCC BAA-1733 / DSM 21960 / TBF 19.5.1)).